Here is an 835-residue protein sequence, read N- to C-terminus: Leucine--tRNA ligase (835 aa).

Residues 44–54 (PYPSGNIHMGH) carry the 'HIGH' region motif. The short motif at 587-591 (KMSKS) is the 'KMSKS' region element. Position 590 (Lys-590) interacts with ATP.

This sequence belongs to the class-I aminoacyl-tRNA synthetase family.

The protein localises to the cytoplasm. The enzyme catalyses tRNA(Leu) + L-leucine + ATP = L-leucyl-tRNA(Leu) + AMP + diphosphate. This is Leucine--tRNA ligase from Lawsonia intracellularis (strain PHE/MN1-00).